Reading from the N-terminus, the 457-residue chain is Exodeoxyribonuclease 7 large subunit (457 aa).

It belongs to the XseA family. Heterooligomer composed of large and small subunits.

It is found in the cytoplasm. It catalyses the reaction Exonucleolytic cleavage in either 5'- to 3'- or 3'- to 5'-direction to yield nucleoside 5'-phosphates.. Bidirectionally degrades single-stranded DNA into large acid-insoluble oligonucleotides, which are then degraded further into small acid-soluble oligonucleotides. The sequence is that of Exodeoxyribonuclease 7 large subunit from Cronobacter sakazakii (strain ATCC BAA-894) (Enterobacter sakazakii).